A 725-amino-acid polypeptide reads, in one-letter code: Methionine--tRNA ligase (725 aa).

Positions 27–37 match the 'HIGH' region motif; the sequence is PYANGQIHIGH. Zn(2+) is bound by residues Cys-158, Cys-161, Cys-171, and Cys-174. Positions 348–352 match the 'KMSKS' region motif; sequence KMSKS. Position 351 (Lys-351) interacts with ATP. The 107-residue stretch at 619-725 folds into the tRNA-binding domain; it reads DFAKIDLRIA…SGAKPGMRVK (107 aa).

This sequence belongs to the class-I aminoacyl-tRNA synthetase family. MetG type 1 subfamily. Homodimer. Zn(2+) serves as cofactor.

The protein resides in the cytoplasm. It catalyses the reaction tRNA(Met) + L-methionine + ATP = L-methionyl-tRNA(Met) + AMP + diphosphate. Its function is as follows. Is required not only for elongation of protein synthesis but also for the initiation of all mRNA translation through initiator tRNA(fMet) aminoacylation. This is Methionine--tRNA ligase from Burkholderia mallei (strain NCTC 10247).